A 448-amino-acid polypeptide reads, in one-letter code: Homogentisate 1,2-dioxygenase (448 aa).

The Proton acceptor role is filled by histidine 303. The Fe cation site is built by histidine 346 and glutamate 352. Positions 361 and 382 each coordinate homogentisate. Histidine 382 provides a ligand contact to Fe cation.

The protein belongs to the homogentisate dioxygenase family. In terms of assembly, hexamer; dimer of trimers. Fe cation is required as a cofactor.

The enzyme catalyses homogentisate + O2 = 4-maleylacetoacetate + H(+). It functions in the pathway amino-acid degradation; L-phenylalanine degradation; acetoacetate and fumarate from L-phenylalanine: step 4/6. Its function is as follows. Involved in the catabolism of homogentisate (2,5-dihydroxyphenylacetate or 2,5-OH-PhAc), a central intermediate in the degradation of phenylalanine and tyrosine. Catalyzes the oxidative ring cleavage of the aromatic ring of homogentisate to yield maleylacetoacetate. This Bradyrhizobium diazoefficiens (strain JCM 10833 / BCRC 13528 / IAM 13628 / NBRC 14792 / USDA 110) protein is Homogentisate 1,2-dioxygenase.